The sequence spans 442 residues: Chromosomal replication initiator protein DnaA (442 aa).

Residues 1–75 form a domain I, interacts with DnaA modulators region; that stretch reads MDAWPRCLER…GNGEVALAVG (75 aa). The segment at 75-104 is domain II; the sequence is GSRPRAPEPLPAPQAVASAPAAAPIVPFAG. The domain III, AAA+ region stretch occupies residues 105-322; that stretch reads NLDSHYTFAN…GALNTLVARA (218 aa). Gly-150, Gly-152, Lys-153, and Thr-154 together coordinate ATP. Positions 323-442 are domain IV, binds dsDNA; sequence NFTGRSITVE…WEKLIRKLSE (120 aa).

Belongs to the DnaA family. In terms of assembly, oligomerizes as a right-handed, spiral filament on DNA at oriC.

It localises to the cytoplasm. Its function is as follows. Plays an essential role in the initiation and regulation of chromosomal replication. ATP-DnaA binds to the origin of replication (oriC) to initiate formation of the DNA replication initiation complex once per cell cycle. Binds the DnaA box (a 9 base pair repeat at the origin) and separates the double-stranded (ds)DNA. Forms a right-handed helical filament on oriC DNA; dsDNA binds to the exterior of the filament while single-stranded (ss)DNA is stabiized in the filament's interior. The ATP-DnaA-oriC complex binds and stabilizes one strand of the AT-rich DNA unwinding element (DUE), permitting loading of DNA polymerase. After initiation quickly degrades to an ADP-DnaA complex that is not apt for DNA replication. Binds acidic phospholipids. The polypeptide is Chromosomal replication initiator protein DnaA (Xanthomonas campestris pv. campestris (strain B100)).